Reading from the N-terminus, the 433-residue chain is Vesicle-associated protein (433 aa).

2 consecutive repeat copies span residues 112 to 122 and 219 to 229. The tract at residues 112-350 is 3 X 11 AA repeats of G-G-G-I-G-G-G-L-G-G-G; the sequence is GGGIGGGLGG…GGIGGGLGGG (239 aa). Residues 266-274 carry the Nuclear localization signal motif; sequence VDGKKKGKG. Repeat 3 spans residues 340–350; it reads GGGIGGGLGGG. Disordered regions lie at residues 366-389 and 411-433; these read RVGG…DGDG and HGKG…NVSG. The segment covering 423–433 has biased composition (basic and acidic residues); the sequence is DIERPDLNVSG.

Egg cortex.

The protein localises to the microsome membrane. The protein resides in the nucleus. Its subcellular location is the endoplasmic reticulum membrane. In terms of biological role, may function as a multidomain RNA-binding protein. May play a role in nuclear RNA processing and in early development. The polypeptide is Vesicle-associated protein (VAP-1) (Strongylocentrotus purpuratus (Purple sea urchin)).